We begin with the raw amino-acid sequence, 465 residues long: FAD-dependent oxidoreductase pigF (465 aa).

A signal peptide spans 1–17 (MMLLTLLILSSVGLAAA). Residues N95, N138, N260, and N327 are each glycosylated (N-linked (GlcNAc...) asparagine). D444 carries the GPI-anchor amidated aspartate lipid modification. Residues 445 to 465 (SASGIWNLTNAVVLPGLLTGL) constitute a propeptide, removed in mature form. A glycan (N-linked (GlcNAc...) asparagine) is linked at N451.

Belongs to the beta-cyclopiazonate dehydrogenase family. FAD serves as cofactor.

It localises to the cell membrane. It functions in the pathway secondary metabolite biosynthesis. FAD-dependent oxidoreductase; part of the gene cluster that mediates the biosynthesis of azaphilone pigments (MonAzPs), a complex mixture of compounds with a common azaphilone skeleton very widely used as food colorants. Within the pathway, pigF desaturates C6(7) to afford the orange and red pigments from yellow pigments. The first step of the pathway is performed by the nrPKS pigA that forms the hexaketide precursor from successive condensations of five malonyl-CoA units, with a simple acetyl-CoA starter unit. The role of esterase pigG is not clear, but it may play at most a supplementary role in the formation of the benzaldehyde produced by the pigA nrPKS. This very reactive benzaldehyde is intercepted by the pigC ketoreductase that to provide the first stable enzyme-free MonAzPs intermediate, 6-(4-hydroxy-2-oxopentyl)-3-methyl-2,4-dioxocyclohexane carbaldehyde, also known as M7PKS-1. The FAD-dependent monooxygenase pigN hydroxylates M7PKS-1 at C-4, which triggers the formation of the pyran ring. PigJ, pigK and pigD are involved in the acetylation of the pyran ring. PigJ and pigK form the two subunits of a dedicated fungal FAS that produces the side chain fatty acyl moiety of MonAzPs and pigD transfers the fatty acyl chain to the C-4 alcohol. PigM and pigO are involved in the elimination of the omega-1 alcohol. PigM acts as an O-acetyltransferase that synthesizes the putative O-11 acetyl intermediate whereas pigO eliminates acetic acid to yield an intermediate with a C10(11) double bond. The dehydration of the C-11 alcohol followed by the reduction of the C6(7) double bond by the NAD(P)H-dependent oxidoreductase pigE increases the electrophilicity of the C-5 ketone of the resulting acyl benzopyran. This in turn sets up the C-5 ketone for an intramolecular Knoevenagel aldol condensation with the C-20 enol of the side chain. This condensation affords the characteristic linear tricyclic carbon skeletons of the yellow pigments that serve as the common precursors for the classical yellow pigments monascin and ankaflavin, orange pigments rubopunctatin and monascorubrin, and red pigments ribropunctamine and monascorubramine. The FAD-dependent oxidoreductase pigF is especially invoved in the biosynthesis of orange and red pigments via desaturation of C6(7). This Monascus ruber (Mold) protein is FAD-dependent oxidoreductase pigF.